We begin with the raw amino-acid sequence, 381 residues long: uncharacterized protein (381 aa).

Residues 176 to 292 form a disordered region; it reads HAAGKIKKSK…EPMVDETPQN (117 aa). Over residues 177 to 186 the composition is skewed to basic residues; sequence AAGKIKKSKN. Positions 187-212 are enriched in basic and acidic residues; the sequence is QKKDGTLSRPLGKKENKSVVKVKIEE. Positions 276–286 are enriched in acidic residues; sequence DEEDEDEEPMV.

This is an uncharacterized protein from Caenorhabditis elegans.